Here is a 313-residue protein sequence, read N- to C-terminus: MMENFKHTTVLLDEAVNGLNIRPDGIYIDGTFGRGGHSRLILSQLGEEGRLLAIDRDPQAIAVAQAINDPRFSIIHGPFSALADYVAERELTGKIDGILLDLGVSSPQLDDAERGFSFMRDGPLDMRMDPTRGQSAAEWLQTAEEADIAWVLKTFGEERFAKRIARAIVERNREQPMTRTKELAEVVAAATPVKDKFKHPATRTFQAVRIWVNSELEEIEQALKSSLSVLAPGGRLSIISFHSLEDRIVKRFMREQSRGPQVPAGLPMTEAQLKKLGGRELRVLGKLMPGEKEVAENPRARSSVLRIAERTNA.

S-adenosyl-L-methionine is bound by residues 35–37, aspartate 55, phenylalanine 79, aspartate 101, and glutamine 108; that span reads GGH.

It belongs to the methyltransferase superfamily. RsmH family.

The protein resides in the cytoplasm. The catalysed reaction is cytidine(1402) in 16S rRNA + S-adenosyl-L-methionine = N(4)-methylcytidine(1402) in 16S rRNA + S-adenosyl-L-homocysteine + H(+). Its function is as follows. Specifically methylates the N4 position of cytidine in position 1402 (C1402) of 16S rRNA. The protein is Ribosomal RNA small subunit methyltransferase H of Salmonella arizonae (strain ATCC BAA-731 / CDC346-86 / RSK2980).